The chain runs to 422 residues: Elongation factor 1-alpha (422 aa).

A tr-type G domain is found at lysine 5–threonine 221. Residues glycine 14–serine 21 form a G1 region. Glycine 14–serine 21 serves as a coordination point for GTP. Residue serine 21 participates in Mg(2+) binding. The segment at glycine 70–aspartate 74 is G2. Residues aspartate 91–glycine 94 form a G3 region. GTP contacts are provided by residues aspartate 91–histidine 95 and asparagine 146–aspartate 149. Positions asparagine 146–aspartate 149 are G4. The interval serine 185 to phenylalanine 187 is G5.

This sequence belongs to the TRAFAC class translation factor GTPase superfamily. Classic translation factor GTPase family. EF-Tu/EF-1A subfamily.

The protein localises to the cytoplasm. It carries out the reaction GTP + H2O = GDP + phosphate + H(+). In terms of biological role, GTP hydrolase that promotes the GTP-dependent binding of aminoacyl-tRNA to the A-site of ribosomes during protein biosynthesis. The sequence is that of Elongation factor 1-alpha from Natronomonas pharaonis (strain ATCC 35678 / DSM 2160 / CIP 103997 / JCM 8858 / NBRC 14720 / NCIMB 2260 / Gabara) (Halobacterium pharaonis).